We begin with the raw amino-acid sequence, 111 residues long: MEAKAIAKYVRMSSMKVRVVLNLVRGKNVNEAFAILKYTPRDAAVVVNKLLKSAVANAENNLDLNRDTLYISEAYACEGPTLKRFQPHAQGRAFRINKRSSHITLIVKERE.

This sequence belongs to the universal ribosomal protein uL22 family. In terms of assembly, part of the 50S ribosomal subunit.

This protein binds specifically to 23S rRNA; its binding is stimulated by other ribosomal proteins, e.g. L4, L17, and L20. It is important during the early stages of 50S assembly. It makes multiple contacts with different domains of the 23S rRNA in the assembled 50S subunit and ribosome. Its function is as follows. The globular domain of the protein is located near the polypeptide exit tunnel on the outside of the subunit, while an extended beta-hairpin is found that lines the wall of the exit tunnel in the center of the 70S ribosome. The protein is Large ribosomal subunit protein uL22 of Clostridium kluyveri (strain NBRC 12016).